The primary structure comprises 431 residues: 3-phosphoshikimate 1-carboxyvinyltransferase (431 aa).

The 3-phosphoshikimate site is built by K21, S22, and R26. K21 contacts phosphoenolpyruvate. 2 residues coordinate phosphoenolpyruvate: G94 and R122. The 3-phosphoshikimate site is built by S167, Q169, D315, and K342. Residue Q169 participates in phosphoenolpyruvate binding. Residue D315 is the Proton acceptor of the active site. Residues R346 and R388 each coordinate phosphoenolpyruvate.

Belongs to the EPSP synthase family. In terms of assembly, monomer.

It localises to the cytoplasm. The catalysed reaction is 3-phosphoshikimate + phosphoenolpyruvate = 5-O-(1-carboxyvinyl)-3-phosphoshikimate + phosphate. The protein operates within metabolic intermediate biosynthesis; chorismate biosynthesis; chorismate from D-erythrose 4-phosphate and phosphoenolpyruvate: step 6/7. Catalyzes the transfer of the enolpyruvyl moiety of phosphoenolpyruvate (PEP) to the 5-hydroxyl of shikimate-3-phosphate (S3P) to produce enolpyruvyl shikimate-3-phosphate and inorganic phosphate. The polypeptide is 3-phosphoshikimate 1-carboxyvinyltransferase (Pelotomaculum thermopropionicum (strain DSM 13744 / JCM 10971 / SI)).